Consider the following 168-residue polypeptide: MAKIADSIDSAQADSVENVESYSTETPESAAPAAPRPVLSVPGAAVGRRKEAIARVRLVPGAGAVTVNGRAFADYFPNKLHQQLITDPFKVLDLVGSYDVIARITGGGPSGQAGALRLAIARALNEIDRENNRPTLKKAGFLTRDARVTERKKAGLKKARKASQFSKR.

The tract at residues 1 to 38 (MAKIADSIDSAQADSVENVESYSTETPESAAPAAPRPV) is disordered. The span at 9 to 22 (DSAQADSVENVESY) shows a compositional bias: polar residues. The span at 23-37 (STETPESAAPAAPRP) shows a compositional bias: low complexity.

Belongs to the universal ribosomal protein uS9 family.

In Leifsonia xyli subsp. xyli (strain CTCB07), this protein is Small ribosomal subunit protein uS9.